Consider the following 180-residue polypeptide: Stathmin-3 (180 aa).

S-palmitoyl cysteine attachment occurs at residues Cys-22 and Cys-24. One can recognise an SLD domain in the interval 38–180 (GDMEVKQLDK…NKEQREEMSG (143 aa)). Ser-50, Ser-60, Ser-65, Ser-68, Ser-72, Ser-73, and Ser-81 each carry phosphoserine. Residues 58-82 (LKSPSDLSPESPMLSSPPKRKDTSL) form a disordered region. Positions 60-74 (SPSDLSPESPMLSSP) are enriched in low complexity. The stretch at 76-179 (KRKDTSLEEL…RNKEQREEMS (104 aa)) forms a coiled coil.

Belongs to the stathmin family. In terms of assembly, interacts with STAT3. Interacts with CLU (secreted form); this interaction may act as an important modulator during neuronal differentiation. Post-translationally, N-terminal palmitoylation promotes specific anchoring to the cytosolic leaflet of Golgi membranes and subsequent vesicular trafficking along dendrites and axons. Neuronal Stathmins are substrates for palmitoyltransferases ZDHHC3, ZDHHC7 and ZDHHC15.

It localises to the golgi apparatus. Its subcellular location is the cell projection. The protein localises to the growth cone. It is found in the axon. The protein resides in the cytoplasm. It localises to the cytosol. Its function is as follows. Exhibits microtubule-destabilizing activity, which is antagonized by STAT3. This chain is Stathmin-3 (STMN3), found in Bos taurus (Bovine).